The primary structure comprises 706 residues: DNA ligase (706 aa).

NAD(+)-binding positions include 47–51 (DSEYD), 96–97 (SI), and E133. K135 functions as the N6-AMP-lysine intermediate in the catalytic mechanism. Residues R156, E192, K323, and K347 each coordinate NAD(+). Zn(2+)-binding residues include C441, C444, C459, and C465. In terms of domain architecture, BRCT spans 624-706 (VAPKPLSGKT…MRLLASAEAE (83 aa)).

Belongs to the NAD-dependent DNA ligase family. LigA subfamily. Mg(2+) is required as a cofactor. Mn(2+) serves as cofactor.

It carries out the reaction NAD(+) + (deoxyribonucleotide)n-3'-hydroxyl + 5'-phospho-(deoxyribonucleotide)m = (deoxyribonucleotide)n+m + AMP + beta-nicotinamide D-nucleotide.. Functionally, DNA ligase that catalyzes the formation of phosphodiester linkages between 5'-phosphoryl and 3'-hydroxyl groups in double-stranded DNA using NAD as a coenzyme and as the energy source for the reaction. It is essential for DNA replication and repair of damaged DNA. This chain is DNA ligase, found in Polaromonas sp. (strain JS666 / ATCC BAA-500).